The primary structure comprises 512 residues: Polyamine oxidase 1 (512 aa).

2 residues coordinate FAD: E38 and R46. Residues 448-470 (DRMAEPLPRGPDAAADERPPSPR) are disordered. E476 contacts FAD.

It belongs to the flavin monoamine oxidase family. Requires FAD as cofactor.

It is found in the cytoplasm. The enzyme catalyses spermine + O2 + H2O = 3-aminopropanal + spermidine + H2O2. The catalysed reaction is N(1)-acetylspermine + O2 + H2O = 3-acetamidopropanal + spermidine + H2O2. It carries out the reaction norspermine + O2 + H2O = norspermidine + 3-aminopropanal + H2O2. It catalyses the reaction thermospermine + O2 + H2O = 3-aminopropanal + spermidine + H2O2. The protein operates within amine and polyamine degradation; spermine degradation. Flavoenzyme involved in polyamine back-conversion. Catalyzes the oxidation of the secondary amino group of polyamines, such as spermine and its acetyl derivatives. Substrate preference is thermospermine &gt; spermine &gt; norspermine &gt; N(1)-acetylspermine. No activity detected when putrescine or spermidine are used as substrates. Plays an important role in the regulation of polyamine intracellular concentration. The polypeptide is Polyamine oxidase 1 (Oryza sativa subsp. japonica (Rice)).